The following is a 207-amino-acid chain: MSNKNTFEGTTTVGITCKDGVVFASERRASMGNLVAHKVAEKIFKIDNHIAATIAGSVADAQTLMKVISAETSLYRLRNGKDISLEAAAAVSSNILHSSPAYVQTLIGGVDDTGASIYSLDAAGGMIKDTFISTGSGSTFAYGVLEDRFYEDITVEEATEVAIRAIKAATERDTFSGNGFLVANVTKDGFKMLEKEEVDAIIEKINS.

The propeptide at 1 to 9 is removed in mature form; by autocatalysis; it reads MSNKNTFEG. Residue Thr10 is the Nucleophile of the active site.

This sequence belongs to the peptidase T1B family. As to quaternary structure, the 20S proteasome core is composed of 14 alpha and 14 beta subunits that assemble into four stacked heptameric rings, resulting in a barrel-shaped structure. The two inner rings, each composed of seven catalytic beta subunits, are sandwiched by two outer rings, each composed of seven alpha subunits. The catalytic chamber with the active sites is on the inside of the barrel. Has a gated structure, the ends of the cylinder being occluded by the N-termini of the alpha-subunits. Is capped at one or both ends by the proteasome regulatory ATPase, PAN.

It localises to the cytoplasm. It carries out the reaction Cleavage of peptide bonds with very broad specificity.. Its activity is regulated as follows. The formation of the proteasomal ATPase PAN-20S proteasome complex, via the docking of the C-termini of PAN into the intersubunit pockets in the alpha-rings, triggers opening of the gate for substrate entry. Interconversion between the open-gate and close-gate conformations leads to a dynamic regulation of the 20S proteasome proteolysis activity. Its function is as follows. Component of the proteasome core, a large protease complex with broad specificity involved in protein degradation. The protein is Proteasome subunit beta of Methanobrevibacter ruminantium (strain ATCC 35063 / DSM 1093 / JCM 13430 / OCM 146 / M1) (Methanobacterium ruminantium).